The sequence spans 425 residues: Serine--tRNA ligase (425 aa).

Residue 233–235 coordinates L-serine; sequence TAE. Residues 264–266 and V280 each bind ATP; that span reads RRE. Residue E287 participates in L-serine binding. 351–354 provides a ligand contact to ATP; that stretch reads EVSS. S387 serves as a coordination point for L-serine.

It belongs to the class-II aminoacyl-tRNA synthetase family. Type-1 seryl-tRNA synthetase subfamily. Homodimer. The tRNA molecule binds across the dimer.

It is found in the cytoplasm. The catalysed reaction is tRNA(Ser) + L-serine + ATP = L-seryl-tRNA(Ser) + AMP + diphosphate + H(+). It catalyses the reaction tRNA(Sec) + L-serine + ATP = L-seryl-tRNA(Sec) + AMP + diphosphate + H(+). It participates in aminoacyl-tRNA biosynthesis; selenocysteinyl-tRNA(Sec) biosynthesis; L-seryl-tRNA(Sec) from L-serine and tRNA(Sec): step 1/1. Catalyzes the attachment of serine to tRNA(Ser). Is also able to aminoacylate tRNA(Sec) with serine, to form the misacylated tRNA L-seryl-tRNA(Sec), which will be further converted into selenocysteinyl-tRNA(Sec). This is Serine--tRNA ligase from Gemmatimonas aurantiaca (strain DSM 14586 / JCM 11422 / NBRC 100505 / T-27).